A 1410-amino-acid polypeptide reads, in one-letter code: Condensin-1 complex subunit CAP-D2 (1410 aa).

Basic and acidic residues predominate over residues 469–480 (LEPTEHASKEST). 4 disordered regions span residues 469 to 492 (LEPTEHASKESTSDGESCNGDGEI), 504 to 525 (HQDSLSDSCQPENGEEISEKDV), 860 to 879 (KTKKDKPAAESQNTEENLEA), and 1208 to 1410 (KEQE…GSRS). Positions 869-879 (ESQNTEENLEA) are enriched in polar residues. Over residues 1208-1226 (KEQEETARNAEVHREKTKT) the composition is skewed to basic and acidic residues. Acidic residues-rich tracts occupy residues 1240 to 1284 (PVEE…EEPD) and 1306 to 1319 (IETEPEEEQSDSEP). Residues 1323–1339 (QCGTTNPRSLNRKTSGD) are compositionally biased toward polar residues. Residues 1342 to 1365 (IETESEEEQSDSEEEPSDSEEEPD) are compositionally biased toward acidic residues. Residues 1368–1379 (QCGTTNPRSLNQ) are compositionally biased toward polar residues.

The protein belongs to the CND1 (condensin subunit 1) family. As to quaternary structure, component of the condensin complex. In terms of tissue distribution, present in buds.

It is found in the chromosome. The protein resides in the nucleus. Its function is as follows. Essential protein. Regulatory subunit of the condensin complex, a complex required for conversion of interphase chromatin into mitotic-like condense chromosomes. The condensin complex probably introduces positive supercoils into relaxed DNA in the presence of type I topoisomerases and converts nicked DNA into positive knotted forms in the presence of type II topoisomerases. Required for fertility, growth and euchromatin organization, but not for sister chromatid cohesion. Necessary to maintain normal structural integrity of the meiotic chromosomes during the two nuclear divisions of gametogenesis, especially to maintain compaction of the centromeric repeats and 45S rDNA. Also seems to be involved in crossover formation during meiotic prophase I. Prevents centromeric and pericentromeric heterochromatin repeats association. Contributes to the induction of stress-responsive genes in response to stress treatment. In Arabidopsis thaliana (Mouse-ear cress), this protein is Condensin-1 complex subunit CAP-D2.